A 96-amino-acid chain; its full sequence is Co-chaperonin GroES (96 aa).

It belongs to the GroES chaperonin family. In terms of assembly, heptamer of 7 subunits arranged in a ring. Interacts with the chaperonin GroEL.

It localises to the cytoplasm. In terms of biological role, together with the chaperonin GroEL, plays an essential role in assisting protein folding. The GroEL-GroES system forms a nano-cage that allows encapsulation of the non-native substrate proteins and provides a physical environment optimized to promote and accelerate protein folding. GroES binds to the apical surface of the GroEL ring, thereby capping the opening of the GroEL channel. This is Co-chaperonin GroES from Caulobacter vibrioides (strain ATCC 19089 / CIP 103742 / CB 15) (Caulobacter crescentus).